Reading from the N-terminus, the 466-residue chain is Vimentin (466 aa).

Composition is skewed to low complexity over residues 1–13 and 20–31; these read MSTRTVSSSSYRR and TASRPSSSRSYV. The tract at residues 1–31 is disordered; the sequence is MSTRTVSSSSYRRMFGGPGTASRPSSSRSYV. Serine 2 is modified (N-acetylserine). Residues 2–95 form a head region; sequence STRTVSSSSY…FSLADAINTE (94 aa). Serine 7 bears the Phosphoserine; alternate mark. Residue serine 7 is glycosylated (O-linked (GlcNAc) serine; alternate). Serine 8, serine 9, and serine 10 each carry phosphoserine. The residue at position 20 (threonine 20) is a Phosphothreonine. Phosphoserine occurs at positions 25 and 26. An O-linked (GlcNAc) threonine glycan is attached at threonine 33. O-linked (GlcNAc) serine; alternate glycosylation occurs at serine 34. Residue serine 34 is modified to Phosphoserine; by PKC; alternate. Residue serine 39 is modified to Phosphoserine; by CaMK2, PKA, PKC and ROCK2. 4 positions are modified to phosphoserine: serine 42, serine 47, serine 49, and serine 51. Tyrosine 53 is subject to Phosphotyrosine. Residue serine 55 is modified to Phosphoserine. Residue serine 56 is modified to Phosphoserine; by CDK5 and CDK1. Position 61 is a phosphotyrosine (tyrosine 61). A Phosphoserine modification is found at serine 66. A Phosphoserine; by AURKB and ROCK2 modification is found at serine 72. Serine 73 and serine 87 each carry phosphoserine. The segment at 96–131 is coil 1A; the sequence is FKNTRTNEKVELQELNDRFANYIDKVRFLEQQNKIL. Residues 96-131 are a coiled coil; the sequence is FKNTRTNEKVELQELNDRFANYIDKVRFLEQQNKIL. Residues 103-411 form the IF rod domain; sequence EKVELQELND…KLLEGEESRI (309 aa). Lysine 104 is covalently cross-linked (Glycyl lysine isopeptide (Lys-Gly) (interchain with G-Cter in SUMO2)). Phosphotyrosine is present on tyrosine 117. Lysine 120, lysine 129, and lysine 139 each carry N6-acetyllysine; alternate. 2 positions are modified to N6-succinyllysine; alternate: lysine 120 and lysine 129. Residues lysine 120, lysine 129, and lysine 139 each participate in a glycyl lysine isopeptide (Lys-Gly) (interchain with G-Cter in SUMO2); alternate cross-link. Residues 132–153 form a linker 1 region; that stretch reads LAELEQLKGQGKSRLGDLYEEE. Serine 144 bears the Phosphoserine mark. A coiled-coil region spans residues 154 to 245; that stretch reads MRELRRQVDQ…KLHDEEIQEL (92 aa). Residues 154–245 are coil 1B; it reads MRELRRQVDQ…KLHDEEIQEL (92 aa). Lysine 168 carries the N6-acetyllysine modification. N6-acetyllysine; alternate is present on lysine 188. Lysine 188 carries the post-translational modification N6-succinyllysine; alternate. Serine 214 bears the Phosphoserine mark. Lysine 223 carries the N6-acetyllysine; alternate modification. Lysine 223 is covalently cross-linked (Glycyl lysine isopeptide (Lys-Gly) (interchain with G-Cter in SUMO2); alternate). A Phosphoserine modification is found at serine 226. The residue at position 235 (lysine 235) is an N6-acetyllysine. The tract at residues 246 to 268 is linker 12; sequence QAQIQEQHVQIDMDVSKPDLTAA. Lysine 262 participates in a covalent cross-link: Glycyl lysine isopeptide (Lys-Gly) (interchain with G-Cter in SUMO2). Residues 269–407 are coil 2; it reads LRDVRQQYES…ATYRKLLEGE (139 aa). Lysine 294 carries the N6-acetyllysine; alternate modification. Lysine 294 carries the N6-succinyllysine; alternate modification. Lysine 294 participates in a covalent cross-link: Glycyl lysine isopeptide (Lys-Gly) (interchain with G-Cter in SUMO2); alternate. Serine 299 is modified (phosphoserine). Residues 303 to 407 are a coiled coil; sequence NRNNDALRQA…ATYRKLLEGE (105 aa). Lysine 313 is covalently cross-linked (Glycyl lysine isopeptide (Lys-Gly) (interchain with G-Cter in SUMO2)). Serine 325 carries the phosphoserine modification. The short motif at 326-329 is the [IL]-x-C-x-x-[DE] motif element; sequence LTCE. The residue at position 373 (lysine 373) is an N6-acetyllysine; alternate. Lysine 373 is covalently cross-linked (Glycyl lysine isopeptide (Lys-Gly) (interchain with G-Cter in SUMO2); alternate). A tail region spans residues 408 to 466; that stretch reads ESRISLPLPNFSSLNLRETNLESLPLVDTHSKRTLLIKTVETRDGQVINETSQHHDDLE. 4 positions are modified to phosphoserine: serine 409, serine 412, serine 419, and serine 420. Residue threonine 426 is modified to Phosphothreonine. At serine 430 the chain carries Phosphoserine. Phosphothreonine is present on threonine 436. Position 438 is a phosphoserine (serine 438). Lysine 439 is covalently cross-linked (Glycyl lysine isopeptide (Lys-Gly) (interchain with G-Cter in SUMO2)). The residue at position 445 (lysine 445) is an N6-acetyllysine; alternate. At lysine 445 the chain carries N6-succinyllysine; alternate. Lysine 445 participates in a covalent cross-link: Glycyl lysine isopeptide (Lys-Gly) (interchain with G-Cter in SUMO2); alternate. A Glycyl lysine isopeptide (Lys-Gly) (interchain with G-Cter in SUMO1); alternate cross-link involves residue lysine 445. A phosphothreonine mark is found at threonine 446 and threonine 458. Position 459 is a phosphoserine (serine 459).

Belongs to the intermediate filament family. In terms of assembly, homomer assembled from elementary dimers. Identified in complexes that contain VIM, EZR, AHNAK, BFSP1, BFSP2, ANK2, PLEC, PRX and spectrin. Interacts with BCAS3. Interacts with LGSN. Interacts with SYNM. Interacts (via rod region) with PLEC (via CH 1 domain). Interacts with STK33. Interacts with LARP6. Interacts with RAB8B. Interacts with TOR1A; the interaction associates TOR1A with the cytoskeleton. Interacts with TOR1AIP1. Interacts with TOR1AIP1. Interacts with DIAPH1. Interacts with EPPK1; interaction is dependent of higher-order structure of intermediate filament. Interacts with the non-receptor tyrosine kinase SRMS; the interaction leads to phosphorylation of VIM. Interacts with NOD2. Interacts (via head region) with CORO1C. Interacts with HDGF. Interacts with PRKCE (via phorbol-ester/DAG-type 2 domain). Interacts with BFSP2. Interacts with PPL. Interacts with PKP1 and PKP2. Interacts with SCRIB (via PDZ domains); the interaction protects SCRIB from proteasomal degradation and facilitates SCRIB localization to intermediate filaments, the interaction is reduced by cell contact inhibition. One of the most prominent phosphoproteins in various cells of mesenchymal origin. Phosphorylation is enhanced during cell division, at which time vimentin filaments are significantly reorganized. Phosphorylation by PKN1 inhibits the formation of filaments. Filament disassembly during mitosis is promoted by phosphorylation at Ser-55 as well as by nestin. Phosphorylated at Ser-56 by CDK5 during neutrophil secretion in the cytoplasm. Phosphorylated by STK33. Phosphorylated on tyrosine residues by SRMS. Post-translationally, S-nitrosylation is induced by interferon-gamma and oxidatively-modified low-densitity lipoprotein (LDL(ox)) possibly implicating the iNOS-S100A8/9 transnitrosylase complex.

The protein resides in the cytoplasm. The protein localises to the cytoskeleton. It is found in the nucleus matrix. It localises to the cell membrane. Its function is as follows. Vimentins are class-III intermediate filaments found in various non-epithelial cells, especially mesenchymal cells. Vimentin is attached to the nucleus, endoplasmic reticulum, and mitochondria, either laterally or terminally. Plays a role in cell directional movement, orientation, cell sheet organization and Golgi complex polarization at the cell migration front. Protects SCRIB from proteasomal degradation and facilitates its localization to intermediate filaments in a cell contact-mediated manner. Involved with LARP6 in the stabilization of type I collagen mRNAs for CO1A1 and CO1A2. The sequence is that of Vimentin (VIM) from Sus scrofa (Pig).